The following is a 126-amino-acid chain: Histone H2B type 2-E (126 aa).

Residues 1–12 (MPEPAKSAPAPK) show a composition bias toward low complexity. Positions 1–32 (MPEPAKSAPAPKKGSKKAVTKAQKKDGKKRKR) are disordered. Pro-2 bears the N-acetylproline mark. Glu-3 carries the post-translational modification ADP-ribosyl glutamic acid. Lys-6 carries the post-translational modification N6-(2-hydroxyisobutyryl)lysine; alternate. Position 6 is an N6-(beta-hydroxybutyryl)lysine; alternate (Lys-6). Lys-6 carries the post-translational modification N6-acetyllysine; alternate. Lys-6 bears the N6-butyryllysine; alternate mark. The residue at position 6 (Lys-6) is an N6-crotonyllysine; alternate. Residue Lys-6 is modified to N6-lactoyllysine; alternate. A Glycyl lysine isopeptide (Lys-Gly) (interchain with G-Cter in SUMO2); alternate cross-link involves residue Lys-6. Ser-7 bears the ADP-ribosylserine mark. The residue at position 12 (Lys-12) is an N6-(beta-hydroxybutyryl)lysine; alternate. Lys-12 and Lys-13 each carry N6-acetyllysine; alternate. Lys-12 and Lys-13 each carry N6-crotonyllysine; alternate. An N6-lactoyllysine; alternate modification is found at Lys-12. N6-(2-hydroxyisobutyryl)lysine; alternate is present on Lys-13. Ser-15 carries the phosphoserine; by STK4/MST1 modification. Lys-16, Lys-17, Lys-21, and Lys-24 each carry N6-acetyllysine; alternate. N6-crotonyllysine; alternate is present on residues Lys-16, Lys-17, Lys-21, and Lys-24. Lys-16, Lys-17, Lys-21, and Lys-24 each carry N6-lactoyllysine; alternate. At Lys-17 the chain carries N6-glutaryllysine; alternate. 2 positions are modified to N6-(2-hydroxyisobutyryl)lysine; alternate: Lys-21 and Lys-24. Lys-21 carries the post-translational modification N6-(beta-hydroxybutyryl)lysine; alternate. Lys-21 carries the N6-butyryllysine; alternate modification. Residue Lys-21 forms a Glycyl lysine isopeptide (Lys-Gly) (interchain with G-Cter in SUMO2); alternate linkage. Residue Lys-25 is modified to N6-(2-hydroxyisobutyryl)lysine. Lys-35 carries the post-translational modification N6-(2-hydroxyisobutyryl)lysine; alternate. Lys-35 carries the post-translational modification N6-(beta-hydroxybutyryl)lysine; alternate. At Lys-35 the chain carries N6-crotonyllysine; alternate. Lys-35 is modified (N6-glutaryllysine; alternate). Position 35 is an N6-succinyllysine; alternate (Lys-35). A Glycyl lysine isopeptide (Lys-Gly) (interchain with G-Cter in ubiquitin); alternate cross-link involves residue Lys-35. The residue at position 36 (Glu-36) is a PolyADP-ribosyl glutamic acid. Ser-37 is subject to Phosphoserine; by AMPK. Residues Lys-44, Lys-47, and Lys-58 each carry the N6-(2-hydroxyisobutyryl)lysine; alternate modification. Lys-44 is subject to N6-lactoyllysine; alternate. 2 positions are modified to N6-glutaryllysine; alternate: Lys-44 and Lys-47. At Lys-47 the chain carries N6-methyllysine; alternate. Lys-58 carries the N6,N6-dimethyllysine; alternate modification. The residue at position 80 (Arg-80) is a Dimethylated arginine. Position 86 is an N6-(2-hydroxyisobutyryl)lysine; alternate (Lys-86). An N6-acetyllysine; alternate modification is found at Lys-86. Lys-86 carries the post-translational modification N6-lactoyllysine; alternate. Lys-86 is subject to N6,N6,N6-trimethyllysine; alternate. Omega-N-methylarginine occurs at positions 87 and 93. Lys-109 carries the N6-(2-hydroxyisobutyryl)lysine; alternate modification. The residue at position 109 (Lys-109) is an N6-lactoyllysine; alternate. At Lys-109 the chain carries N6-glutaryllysine; alternate. Lys-109 carries the post-translational modification N6-methyllysine; alternate. Ser-113 carries an O-linked (GlcNAc) serine glycan. Thr-116 bears the Phosphothreonine mark. Residues Lys-117 and Lys-121 each carry the N6-(2-hydroxyisobutyryl)lysine; alternate modification. Lys-117 carries the N6-(beta-hydroxybutyryl)lysine; alternate modification. N6-lactoyllysine; alternate occurs at positions 117 and 121. 2 positions are modified to N6-glutaryllysine; alternate: Lys-117 and Lys-121. N6-succinyllysine; alternate is present on residues Lys-117 and Lys-121. Residue Lys-117 is modified to N6-methylated lysine; alternate. Lys-121 is covalently cross-linked (Glycyl lysine isopeptide (Lys-Gly) (interchain with G-Cter in ubiquitin); alternate).

Belongs to the histone H2B family. As to quaternary structure, the nucleosome is a histone octamer containing two molecules each of H2A, H2B, H3 and H4 assembled in one H3-H4 heterotetramer and two H2A-H2B heterodimers. The octamer wraps approximately 147 bp of DNA. In terms of processing, monoubiquitination at Lys-35 (H2BK34Ub) by the MSL1/MSL2 dimer is required for histone H3 'Lys-4' (H3K4me) and 'Lys-79' (H3K79me) methylation and transcription activation at specific gene loci, such as HOXA9 and MEIS1 loci. Similarly, monoubiquitination at Lys-121 (H2BK120Ub) by the RNF20/40 complex gives a specific tag for epigenetic transcriptional activation and is also prerequisite for histone H3 'Lys-4' and 'Lys-79' methylation. It also functions cooperatively with the FACT dimer to stimulate elongation by RNA polymerase II. H2BK120Ub also acts as a regulator of mRNA splicing: deubiquitination by USP49 is required for efficient cotranscriptional splicing of a large set of exons. Phosphorylated on Ser-15 (H2BS14ph) by STK4/MST1 during apoptosis; which facilitates apoptotic chromatin condensation. Also phosphorylated on Ser-15 in response to DNA double strand breaks (DSBs), and in correlation with somatic hypermutation and immunoglobulin class-switch recombination. Phosphorylation at Ser-37 (H2BS36ph) by AMPK in response to stress promotes transcription. Post-translationally, ADP-ribosylated by PARP1 or PARP2 on Ser-7 (H2BS6ADPr) in response to DNA damage. H2BS6ADPr promotes recruitment of CHD1L. Mono-ADP-ribosylated on Glu-3 (H2BE2ADPr) by PARP3 in response to single-strand breaks. Poly ADP-ribosylation on Glu-36 (H2BE35ADPr) by PARP1 regulates adipogenesis: it inhibits phosphorylation at Ser-37 (H2BS36ph), thereby blocking expression of pro-adipogenetic genes. In terms of processing, crotonylation (Kcr) is specifically present in male germ cells and marks testis-specific genes in post-meiotic cells, including X-linked genes that escape sex chromosome inactivation in haploid cells. Crotonylation marks active promoters and enhancers and confers resistance to transcriptional repressors. It is also associated with post-meiotically activated genes on autosomes. GlcNAcylation at Ser-113 promotes monoubiquitination of Lys-121. It fluctuates in response to extracellular glucose, and associates with transcribed genes. Post-translationally, lactylated in macrophages by EP300/P300 by using lactoyl-CoA directly derived from endogenous or exogenous lactate, leading to stimulates gene transcription.

It localises to the nucleus. The protein localises to the chromosome. Functionally, core component of nucleosome. Nucleosomes wrap and compact DNA into chromatin, limiting DNA accessibility to the cellular machineries which require DNA as a template. Histones thereby play a central role in transcription regulation, DNA repair, DNA replication and chromosomal stability. DNA accessibility is regulated via a complex set of post-translational modifications of histones, also called histone code, and nucleosome remodeling. Its function is as follows. Has broad antibacterial activity. May contribute to the formation of the functional antimicrobial barrier of the colonic epithelium, and to the bactericidal activity of amniotic fluid. This Pongo abelii (Sumatran orangutan) protein is Histone H2B type 2-E.